The sequence spans 1077 residues: Ubiquitin-activating enzyme E1 2 (1077 aa).

The interval 16 to 36 (SPMKKRRIDHTESADGSAINA) is disordered. Residues Ala-499, Asp-525, Arg-536, Lys-549, and 597-598 (DN) contribute to the ATP site. The active-site Glycyl thioester intermediate is the Cys-653.

Belongs to the ubiquitin-activating E1 family. As to quaternary structure, monomer. As to expression, expressed in leaves, flowers, roots and stems. Detected in germinating seeds, cotyledons, hypocotyls, vascular tissues, anthers, filaments, pollen, style, stigma, sepals, petals, ovary, developing ovules, funiculi and silique walls.

The catalysed reaction is ATP + ubiquitin + [E1 ubiquitin-activating enzyme]-L-cysteine = AMP + diphosphate + S-ubiquitinyl-[E1 ubiquitin-activating enzyme]-L-cysteine.. Its pathway is protein modification; protein ubiquitination. In terms of biological role, activates ubiquitin by first adenylating its C-terminal glycine residue with ATP, and thereafter linking this residue to the side chain of a cysteine residue in E1, yielding a ubiquitin-E1 thioester and free AMP. This chain is Ubiquitin-activating enzyme E1 2 (UBA2), found in Arabidopsis thaliana (Mouse-ear cress).